Here is an 831-residue protein sequence, read N- to C-terminus: Sodium/hydrogen exchanger 3 (831 aa).

A signal peptide spans 1 to 28 (MWHPALGPGWKPLLALALALTSLRGVRG). Residues 29-48 (IEEEPNSGGSFQIVTFKWHH) lie on the Extracellular side of the membrane. A helical membrane pass occupies residues 49-71 (VQDPYIIALWILVASLAKIVFHL). Over 72 to 79 (SHKVTSVV) the chain is Cytoplasmic. A helical membrane pass occupies residues 80–99 (PESALLIVLGLVLGGIVWAA). Residues 100–108 (DHIASFTLT) lie on the Extracellular side of the membrane. Residues 109-126 (PTLFFFYLLPPIVLDAGY) form a helical membrane-spanning segment. Over 127–129 (FMP) the chain is Cytoplasmic. The helical transmembrane segment at 130-165 (NRLFFGNLGTILLYAVIGTIWNAATTGLSLYGVFLS) threads the bilayer. A 1,2-diacyl-sn-glycero-3-phospho-(1D-myo-inositol) contacts are provided by Gly135, Gly138, and Thr139. Residues 166–178 (GLMGELKIGLLDF) lie on the Extracellular side of the membrane. The chain crosses the membrane as a helical span at residues 179–200 (LLFGSLIAAVDPVAVLAVFEEV). Topologically, residues 201-202 (HV) are cytoplasmic. Residues 203–234 (NEVLFIIVFGESLLNDAVTVVLYNVFESFVTL) traverse the membrane as a helical segment. Residues 235-241 (GGDAVTG) lie on the Extracellular side of the membrane. The chain crosses the membrane as a helical span at residues 242–276 (VDCVKGIVSFFVVSLGGTLVGVIFAFLLSLVTRFT). The Cytoplasmic segment spans residues 277 to 278 (KH). A helical membrane pass occupies residues 279-301 (VRIIEPGFVFVISYLSYLTSEML). Residues 302-303 (SL) lie on the Extracellular side of the membrane. The helical transmembrane segment at 304 to 320 (SAILAITFCGICCQKYV) threads the bilayer. The Cytoplasmic portion of the chain corresponds to 321-327 (KANISEQ). A helical transmembrane segment spans residues 328-356 (SATTVRYTMKMLASGAETIIFMFLGISAV). Residues 357-364 (DPVIWTWN) are Extracellular-facing. The chain crosses the membrane as a helical span at residues 365-386 (TAFVLLTLVFISVYRAIGVVLQ). Over 387 to 399 (TWILNRYRMVQLE) the chain is Cytoplasmic. Met395 is a binding site for a 1,2-diacyl-sn-glycero-3-phospho-(1D-myo-inositol). Residues 400-423 (TIDQVVMSYGGLRGAVAYALVVLL) traverse the membrane as a helical segment. Residues 424–430 (DEKKVKE) lie on the Extracellular side of the membrane. A helical membrane pass occupies residues 431 to 464 (KNLFVSTTLIVVFFTVIFQGLTIKPLVQWLKVKR). Over 465–831 (SEQREPKLNE…QPASPESTHM (367 aa)) the chain is Cytoplasmic. 3 residues coordinate a 1,2-diacyl-sn-glycero-3-phospho-(1D-myo-inositol): Gln494, Ile495, and His497. A phosphoserine mark is found at Ser552 and Ser560. Residues 573–587 (RPSTVEASVSYFLRE) form an interaction with EZR region. An interaction with NHERF4 region spans residues 588-665 (NVSAVCLDMQ…RKRLESFKSA (78 aa)). The tract at residues 589 to 693 (VSAVCLDMQS…AQKRRNSSIP (105 aa)) is interaction with AHCYL1. Phosphoserine is present on residues Ser590 and Ser605. Residue Ser661 is modified to Phosphoserine; by SGK1. A phosphoserine mark is found at Ser716, Ser807, and Ser810. Residues 808-831 (VDSFLQADGPEEQLQPASPESTHM) form a disordered region. Polar residues predominate over residues 822 to 831 (QPASPESTHM).

This sequence belongs to the monovalent cation:p,roton antiporter 1 (CPA1) transporter (TC 2.A.36) family. As to quaternary structure, homodimer. Found in the forms of complex and dynamic macromolecular complexes. Binds NHERF1 and NHERF2. Interacts with NHERF4 and interactions decrease in response to elevated calcium ion levels. Interacts with PDZK1 (via C-terminal PDZ domain). Interacts with CHP1; this interaction increases trafficking and activity at the plasma membrane of SLC9A3. Interacts with CHP2 and SHANK2. Interacts with AHCYL1; the interaction is required for SLC9A3 activity. Interacts with EZR; interaction targets SLC9A3 to the apical membrane. Interacts with SNX27 (via PDZ domains); directs SLC9A3 membrane insertion from early endosomes to the plasma membrane. Phosphorylated by PRKACA at Ser-552 and Ser-605, which inhibits activity. Phosphorylation of Ser-605 is essential for cAMP-mediated inhibition of SLC9A3. Phosphorylation at Ser-661 by SGK1 is associated with increased abundance at the cell membrane. Phosphorylation at Ser-716 by CSNK2A1 regulates SLC9A3 activity through the formation of multiple signaling complexes. Most abundant in colon and small intestine, followed by kidney and stomach. In kidney, expressed in proximal tubules and outer medulla (at protein level).

Its subcellular location is the apical cell membrane. The protein resides in the cell membrane. It localises to the recycling endosome membrane. It is found in the early endosome membrane. It carries out the reaction Na(+)(in) + H(+)(out) = Na(+)(out) + H(+)(in). Its activity is regulated as follows. Seems to switch between active and inactive modes in response to various stimuli. Activated directly or indirectly by membrane phosphatidylinositol (PIs). Regulated by a variety of auxiliary proteins, which facilitate the maturation, cell surface expression and function of the transporter. Inhibited specifically by the drug tenapanor. Plasma membrane Na(+)/H(+) antiporter. Exchanges intracellular H(+) ions for extracellular Na(+) in 1:1 stoichiometry, playing a key role in salt and fluid absorption and pH homeostasis. Major apical Na(+)/H(+) exchanger in kidney and intestine playing an important role in renal and intestine Na(+) absorption and blood pressure regulation. This Rattus norvegicus (Rat) protein is Sodium/hydrogen exchanger 3 (Slc9a3).